The primary structure comprises 319 residues: Secreted effector protein sopD2 (319 aa).

Positions 37-44 match the Required to target late endocytic compartments motif; sequence WDRFKDCF.

The protein belongs to the SopD family.

The protein resides in the secreted. It is found in the host cell membrane. Functionally, effector proteins function to alter host cell physiology and promote bacterial survival in host tissues. Contributes to the formation of Salmonella-induced filaments (Sifs) in infected epithelial cells and to replication in macrophages. The protein is Secreted effector protein sopD2 (sopD2) of Salmonella typhimurium (strain LT2 / SGSC1412 / ATCC 700720).